The chain runs to 754 residues: RNA exonuclease 5 (754 aa).

Positions 1–36 (MELEEEENPRKRKETPNSALTTELDRPSWDVQDPEP) are disordered. One can recognise an Exonuclease domain in the interval 222-370 (LFGLDCEVCL…EDARTALELV (149 aa)). RRM domains follow at residues 488–562 (STIY…RLLT) and 583–662 (GTIY…RHLQ).

The protein is RNA exonuclease 5 (Rexo5) of Rattus norvegicus (Rat).